The sequence spans 507 residues: FAD-linked oxidoreductase OXR1 (507 aa).

A signal peptide spans 1-21 (MTIKFASLILAGLGLGSGALG). N-linked (GlcNAc...) asparagine glycans are attached at residues Asn-34 and Asn-65. An FAD-binding PCMH-type domain is found at 73–245 (YAPPTFKVSV…VSATYKLKPL (173 aa)). N-linked (GlcNAc...) asparagine glycans are attached at residues Asn-263 and Asn-288.

The protein belongs to the oxygen-dependent FAD-linked oxidoreductase family. Requires FAD as cofactor.

It carries out the reaction dihydropyriculol + A = pyriculol + AH2. It catalyses the reaction dihydropyriculariol + A = pyriculariol + AH2. It functions in the pathway polyketide biosynthesis. Its function is as follows. FAD-linked oxidoreductase; part of the gene cluster that mediates the biosynthesis of pyriculol and pyriculariol, two heptaketides that induce lesion formation upon application on rice leaves but are dispensable for pathogenicity. The highly reducing polyketide synthase synthesizes the heptaketide backbone of pyriculol and pyriculariol. Pyriculol and pyriculariol contain several hydroxyl moieties and double bonds, so it can be assumed that several reduction steps occur during biosynthesis. These reactions could be executed by PKS19 itself or partly by the tailoring enzymes OXR1, OXR2, RED1, RED2 or RED3, identified within the cluster. The FAD-linked oxidoreductase OXR1 is the only tailoring enzyme for which the function has been determined yet, and is involved in the oxidation of dihydropyriculol and dihydropyriculariol into pyriculol and pyriculariol, respectively. This chain is FAD-linked oxidoreductase OXR1, found in Pyricularia oryzae (strain 70-15 / ATCC MYA-4617 / FGSC 8958) (Rice blast fungus).